The following is a 152-amino-acid chain: 3-dehydroquinate dehydratase (152 aa).

Y26 functions as the Proton acceptor in the catalytic mechanism. Residues N78, H84, and D91 each coordinate substrate. The active-site Proton donor is H104. Substrate contacts are provided by residues L105–S106 and R115.

The protein belongs to the type-II 3-dehydroquinase family. As to quaternary structure, homododecamer.

It carries out the reaction 3-dehydroquinate = 3-dehydroshikimate + H2O. Its pathway is metabolic intermediate biosynthesis; chorismate biosynthesis; chorismate from D-erythrose 4-phosphate and phosphoenolpyruvate: step 3/7. Catalyzes a trans-dehydration via an enolate intermediate. The sequence is that of 3-dehydroquinate dehydratase from Idiomarina loihiensis (strain ATCC BAA-735 / DSM 15497 / L2-TR).